Here is a 253-residue protein sequence, read N- to C-terminus: Adapter protein MecA (253 aa).

It belongs to the MecA family. As to quaternary structure, homodimer.

Functionally, enables the recognition and targeting of unfolded and aggregated proteins to the ClpC protease or to other proteins involved in proteolysis. The polypeptide is Adapter protein MecA (Streptococcus pyogenes serotype M6 (strain ATCC BAA-946 / MGAS10394)).